The sequence spans 258 residues: Coiled-coil domain-containing protein 107 (258 aa).

Residues 1-24 (MASVVSLAGTLGLLLVSALPEVLG) form the signal peptide. Residues 25 to 35 (DRRSPDRRAHP) are compositionally biased toward basic and acidic residues. The interval 25–63 (DRRSPDRRAHPGDAGQVGPAAAEPRRQSPPSKNQRERAR) is disordered. The chain crosses the membrane as a helical span at residues 66–86 (ALPLGALYTAAAVAFVLYKCL). The stretch at 106–134 (LQSEQHLAQLTQQLVQTEQHLNSLMAQLD) forms a coiled coil. The segment at 203–222 (EPLNWNTGTRNLTPPREMQP) is disordered.

The protein resides in the membrane. The sequence is that of Coiled-coil domain-containing protein 107 (CCDC107) from Bos taurus (Bovine).